A 376-amino-acid chain; its full sequence is MTVLVVNSGSSSLKYAVVRPASGEFLADGIIEEIGSGAVPDHDAALRAAFDELAAAGLHLEDLDLKAVGHRMVHGGKTFYKPSVVDDELIAKARELSPLAPLHNPPAIKGIEVARKLLPDLPHIAVFDTAFFHDLPAPASTYAIDRELAETWHIKRYGFHGTSHEYVSQQAAIFLDRPLESLNQIVLHLGNGASASAVAGGKAVDTSMGLTPMEGLVMGTRSGDIDPGVIMYLWRTAGMSVDDIESMLNRRSGVLGLGGASDFRKLRELIESGDEHAKLAYDVYIHRLRKYIGAYMAVLGRTDVISFTAGVGENVPPVRRDALAGLGGLGIEIDDALNSAKSDEPRLISTPDSRVTVLVVPTNEELAIARACVGVV.

Position 7 (asparagine 7) interacts with Mg(2+). Lysine 14 is an ATP binding site. A substrate-binding site is contributed by arginine 71. Aspartate 128 (proton donor/acceptor) is an active-site residue. ATP-binding positions include 188 to 192 (HLGNG), 262 to 264 (DFR), and 310 to 314 (GVGEN). Glutamate 364 serves as a coordination point for Mg(2+).

This sequence belongs to the acetokinase family. Homodimer. The cofactor is Mg(2+). It depends on Mn(2+) as a cofactor.

It localises to the cytoplasm. It carries out the reaction acetate + ATP = acetyl phosphate + ADP. It participates in metabolic intermediate biosynthesis; acetyl-CoA biosynthesis; acetyl-CoA from acetate: step 1/2. In terms of biological role, catalyzes the formation of acetyl phosphate from acetate and ATP. Can also catalyze the reverse reaction. This is Acetate kinase from Mycolicibacterium smegmatis (strain ATCC 700084 / mc(2)155) (Mycobacterium smegmatis).